A 266-amino-acid chain; its full sequence is Tryptophan synthase alpha chain (266 aa).

Active-site proton acceptor residues include Glu-49 and Asp-60.

This sequence belongs to the TrpA family. As to quaternary structure, tetramer of two alpha and two beta chains.

It catalyses the reaction (1S,2R)-1-C-(indol-3-yl)glycerol 3-phosphate + L-serine = D-glyceraldehyde 3-phosphate + L-tryptophan + H2O. Its pathway is amino-acid biosynthesis; L-tryptophan biosynthesis; L-tryptophan from chorismate: step 5/5. Functionally, the alpha subunit is responsible for the aldol cleavage of indoleglycerol phosphate to indole and glyceraldehyde 3-phosphate. This Shewanella amazonensis (strain ATCC BAA-1098 / SB2B) protein is Tryptophan synthase alpha chain.